Reading from the N-terminus, the 180-residue chain is Transcription repressor NadR (180 aa).

In terms of assembly, homodimer.

In terms of biological role, in the presence of nicotinic acid represses transcription of the nadBCA and nifS-nadR operons. Also binds to DNA upstream of the niaP gene, probably regulating it as well. May bind nicotinic acid. The protein is Transcription repressor NadR (nadR) of Bacillus subtilis (strain 168).